We begin with the raw amino-acid sequence, 354 residues long: UDP-N-acetylglucosamine--N-acetylmuramyl-(pentapeptide) pyrophosphoryl-undecaprenol N-acetylglucosamine transferase (354 aa).

Residues 15 to 17 (TGG), N127, R163, S191, I244, 263 to 268 (ALTVSE), and Q288 each bind UDP-N-acetyl-alpha-D-glucosamine.

It belongs to the glycosyltransferase 28 family. MurG subfamily.

The protein resides in the cell inner membrane. The enzyme catalyses di-trans,octa-cis-undecaprenyl diphospho-N-acetyl-alpha-D-muramoyl-L-alanyl-D-glutamyl-meso-2,6-diaminopimeloyl-D-alanyl-D-alanine + UDP-N-acetyl-alpha-D-glucosamine = di-trans,octa-cis-undecaprenyl diphospho-[N-acetyl-alpha-D-glucosaminyl-(1-&gt;4)]-N-acetyl-alpha-D-muramoyl-L-alanyl-D-glutamyl-meso-2,6-diaminopimeloyl-D-alanyl-D-alanine + UDP + H(+). The protein operates within cell wall biogenesis; peptidoglycan biosynthesis. Functionally, cell wall formation. Catalyzes the transfer of a GlcNAc subunit on undecaprenyl-pyrophosphoryl-MurNAc-pentapeptide (lipid intermediate I) to form undecaprenyl-pyrophosphoryl-MurNAc-(pentapeptide)GlcNAc (lipid intermediate II). The sequence is that of UDP-N-acetylglucosamine--N-acetylmuramyl-(pentapeptide) pyrophosphoryl-undecaprenol N-acetylglucosamine transferase from Aliivibrio fischeri (strain ATCC 700601 / ES114) (Vibrio fischeri).